Reading from the N-terminus, the 270-residue chain is uncharacterized protein (270 aa).

The first 22 residues, methionine 1–glycine 22, serve as a signal peptide directing secretion. Cysteine 23 is lipidated: N-palmitoyl cysteine. Cysteine 23 is lipidated: S-diacylglycerol cysteine.

This sequence belongs to the staphylococcal tandem lipoprotein family.

It is found in the cell membrane. This is an uncharacterized protein from Staphylococcus aureus (strain NCTC 8325 / PS 47).